We begin with the raw amino-acid sequence, 154 residues long: Ribosome maturation factor RimP (154 aa).

Belongs to the RimP family.

The protein localises to the cytoplasm. Its function is as follows. Required for maturation of 30S ribosomal subunits. The sequence is that of Ribosome maturation factor RimP from Yersinia pseudotuberculosis serotype O:1b (strain IP 31758).